Reading from the N-terminus, the 141-residue chain is Putative nickel-responsive regulator (141 aa).

Ni(2+) is bound by residues histidine 80, histidine 91, histidine 93, and cysteine 99.

The protein belongs to the transcriptional regulatory CopG/NikR family. Homotetramer. It depends on Ni(2+) as a cofactor.

Functionally, transcriptional regulator. This is Putative nickel-responsive regulator from Methanocaldococcus jannaschii (strain ATCC 43067 / DSM 2661 / JAL-1 / JCM 10045 / NBRC 100440) (Methanococcus jannaschii).